We begin with the raw amino-acid sequence, 248 residues long: 3,4-dihydroxyphthalate decarboxylase (248 aa).

E90 (proton donor/acceptor) is an active-site residue. Residues E90, H109, H111, and H177 each coordinate a divalent metal cation.

Belongs to the aldolase class II family. The cofactor is a divalent metal cation.

It carries out the reaction 3,4-dihydroxyphthalate + H(+) = 3,4-dihydroxybenzoate + CO2. It participates in xenobiotic degradation; phthalate degradation. Functionally, catalyzes the decarboxylation of 3,4-dihydroxyphthalate to protocatechuate (3,4-dihydroxybenzoate) during phthalate metabolism. This is 3,4-dihydroxyphthalate decarboxylase from Arthrobacter keyseri.